Here is a 123-residue protein sequence, read N- to C-terminus: MADLAKIVEDLSALTVLEAAELSKLLEEKWGVSASAAVAVAAAPAAGGAAAEEKTEFDVILTGDGGKKINVIKEIRAITGLGLTDAKALVEGAPKPVKEGVAKDEAEKLKKQLEAAGATVELK.

This sequence belongs to the bacterial ribosomal protein bL12 family. As to quaternary structure, homodimer. Part of the ribosomal stalk of the 50S ribosomal subunit. Forms a multimeric L10(L12)X complex, where L10 forms an elongated spine to which 2 to 4 L12 dimers bind in a sequential fashion. Binds GTP-bound translation factors.

Its function is as follows. Forms part of the ribosomal stalk which helps the ribosome interact with GTP-bound translation factors. Is thus essential for accurate translation. This is Large ribosomal subunit protein bL12 from Zymomonas mobilis subsp. mobilis (strain ATCC 31821 / ZM4 / CP4).